The following is a 381-amino-acid chain: Chaperone protein DnaJ (381 aa).

Positions 5–73 constitute a J domain; the sequence is DYYEVLGVGK…EKKAAYDQYG (69 aa). A CR-type zinc finger spans residues 141 to 219; it reads GHEAQIRVPH…CHGQGKLKSQ (79 aa). 8 residues coordinate Zn(2+): Cys-154, Cys-157, Cys-171, Cys-174, Cys-193, Cys-196, Cys-207, and Cys-210. CXXCXGXG motif repeat units follow at residues 154 to 161, 171 to 178, 193 to 200, and 207 to 214; these read CDHCHGNG, CPTCHGAG, CPKCHGSG, and CTKCHGQG. The segment at 357-381 is disordered; sequence SVHEGGSRHSPQEQSWLDKVKSFFS.

Belongs to the DnaJ family. Homodimer. It depends on Zn(2+) as a cofactor.

It localises to the cytoplasm. Participates actively in the response to hyperosmotic and heat shock by preventing the aggregation of stress-denatured proteins and by disaggregating proteins, also in an autonomous, DnaK-independent fashion. Unfolded proteins bind initially to DnaJ; upon interaction with the DnaJ-bound protein, DnaK hydrolyzes its bound ATP, resulting in the formation of a stable complex. GrpE releases ADP from DnaK; ATP binding to DnaK triggers the release of the substrate protein, thus completing the reaction cycle. Several rounds of ATP-dependent interactions between DnaJ, DnaK and GrpE are required for fully efficient folding. Also involved, together with DnaK and GrpE, in the DNA replication of plasmids through activation of initiation proteins. This Cupriavidus necator (strain ATCC 17699 / DSM 428 / KCTC 22496 / NCIMB 10442 / H16 / Stanier 337) (Ralstonia eutropha) protein is Chaperone protein DnaJ.